Reading from the N-terminus, the 198-residue chain is Holliday junction branch migration complex subunit RuvA (198 aa).

Residues 1–63 are domain I; it reads MYDYIKGQLT…EDAHLLFGFH (63 aa). Positions 64-142 are domain II; it reads TEDEKDVFLK…EAPQETGNTK (79 aa). The flexible linker stretch occupies residues 143–147; that stretch reads ARSNK. The interval 148 to 198 is domain III; the sequence is AGNTQLDEAIEALLALGYKATELKKIRAFFEGTSETAEQYIKSALKLLMKG.

The protein belongs to the RuvA family. In terms of assembly, homotetramer. Forms an RuvA(8)-RuvB(12)-Holliday junction (HJ) complex. HJ DNA is sandwiched between 2 RuvA tetramers; dsDNA enters through RuvA and exits via RuvB. An RuvB hexamer assembles on each DNA strand where it exits the tetramer. Each RuvB hexamer is contacted by two RuvA subunits (via domain III) on 2 adjacent RuvB subunits; this complex drives branch migration. In the full resolvosome a probable DNA-RuvA(4)-RuvB(12)-RuvC(2) complex forms which resolves the HJ.

Its subcellular location is the cytoplasm. Functionally, the RuvA-RuvB-RuvC complex processes Holliday junction (HJ) DNA during genetic recombination and DNA repair, while the RuvA-RuvB complex plays an important role in the rescue of blocked DNA replication forks via replication fork reversal (RFR). RuvA specifically binds to HJ cruciform DNA, conferring on it an open structure. The RuvB hexamer acts as an ATP-dependent pump, pulling dsDNA into and through the RuvAB complex. HJ branch migration allows RuvC to scan DNA until it finds its consensus sequence, where it cleaves and resolves the cruciform DNA. This is Holliday junction branch migration complex subunit RuvA from Streptococcus pyogenes serotype M12 (strain MGAS2096).